A 28-amino-acid chain; its full sequence is Expansin-B1 (28 aa).

The region spanning 11–28 (MLLSLQGPXSLRMVSESG) is the Expansin-like CBD domain.

It belongs to the expansin family. Expansin B subfamily.

It localises to the secreted. The protein localises to the cell wall. Its subcellular location is the membrane. May cause loosening and extension of plant cell walls by disrupting non-covalent bonding between cellulose microfibrils and matrix glucans. The protein is Expansin-B1 of Pseudotsuga menziesii (Douglas-fir).